Consider the following 30-residue polypeptide: Cyclotide cter-H (30 aa).

Positions 1–30 (GLPCGESCVFIPCITTVVGCSCKNKVCYND) form a cross-link, cyclopeptide (Gly-Asp). Cystine bridges form between C4-C20, C8-C22, and C13-C27.

Contains 3 disulfide bonds. In terms of processing, this is a cyclic peptide.

Probably participates in a plant defense mechanism. The protein is Cyclotide cter-H of Clitoria ternatea (Butterfly pea).